Consider the following 481-residue polypeptide: Proline--tRNA ligase (481 aa).

This sequence belongs to the class-II aminoacyl-tRNA synthetase family. ProS type 3 subfamily. Homodimer.

It is found in the cytoplasm. The catalysed reaction is tRNA(Pro) + L-proline + ATP = L-prolyl-tRNA(Pro) + AMP + diphosphate. In terms of biological role, catalyzes the attachment of proline to tRNA(Pro) in a two-step reaction: proline is first activated by ATP to form Pro-AMP and then transferred to the acceptor end of tRNA(Pro). The protein is Proline--tRNA ligase of Thermococcus kodakarensis (strain ATCC BAA-918 / JCM 12380 / KOD1) (Pyrococcus kodakaraensis (strain KOD1)).